The following is a 331-amino-acid chain: Apoptosis inhibitor UL38 (331 aa).

Residues 246–309 (TGAQPSHAPA…ELSSSPPLPP (64 aa)) are disordered. Residues 275 to 304 (AAAATPPSSAATTPPSSVVPASVESELSSS) are compositionally biased toward low complexity.

It belongs to the beta-herpesvirinae UL38 protein family. As to quaternary structure, interacts with host MDM2; this interaction leads to the stabilization of host TP53. Interacts with host TSC2; this interaction prevents host cell stress responses. Interacts with host USP24.

It localises to the host cytoplasm. The protein resides in the host nucleus. In terms of biological role, plays a role in the inhibition of host apoptosis to facilitate efficient viral replication. Promotes stabilization and inactivation of host TP53 through interaction with host MDM2. Induces host mTORC1 activation by antagonizing the ability of host TSC1/2 to negatively regulate mTORC1. Thus, inhibits a growth regulatory pathway to facilitate viral replication. Prevents premature cell host cell death by blocking host ubiquitin-specific protease 24/USP24-mediated autophagic ferritin degradation in lysosomes thus maintaining lysosome integrity and cellular viability. Involved in the activation of host ENO2 leading to enhanced glycolysis and UDP-sugar metabolism in order to enable the expression of viral glycoproteins. The protein is Apoptosis inhibitor UL38 (UL38) of Human cytomegalovirus (strain Merlin) (HHV-5).